A 286-amino-acid polypeptide reads, in one-letter code: Elongation factor Ts (286 aa).

The involved in Mg(2+) ion dislocation from EF-Tu stretch occupies residues 79 to 82 (TDFV).

It belongs to the EF-Ts family.

It localises to the cytoplasm. Associates with the EF-Tu.GDP complex and induces the exchange of GDP to GTP. It remains bound to the aminoacyl-tRNA.EF-Tu.GTP complex up to the GTP hydrolysis stage on the ribosome. This Wolbachia pipientis wMel protein is Elongation factor Ts.